Here is a 212-residue protein sequence, read N- to C-terminus: Dephospho-CoA kinase (212 aa).

A DPCK domain is found at 3–207 (IIGLTGGIAS…RHLADDPEPG (205 aa)). 11-16 (ASGKST) serves as a coordination point for ATP.

This sequence belongs to the CoaE family.

It is found in the cytoplasm. The enzyme catalyses 3'-dephospho-CoA + ATP = ADP + CoA + H(+). The protein operates within cofactor biosynthesis; coenzyme A biosynthesis; CoA from (R)-pantothenate: step 5/5. Its function is as follows. Catalyzes the phosphorylation of the 3'-hydroxyl group of dephosphocoenzyme A to form coenzyme A. The chain is Dephospho-CoA kinase from Moorella thermoacetica (strain ATCC 39073 / JCM 9320).